A 201-amino-acid polypeptide reads, in one-letter code: Zinc finger protein 239 (201 aa).

C2H2-type zinc fingers lie at residues 6 to 28 (YKCDKCGKGFTRSSSLLVHHSVH), 34 to 56 (FKCDRCGKGFSQSSKLHIHKRVH), 62 to 84 (YACEECGMSFSQRSNLHIHQRVH), 90 to 112 (YKCGECGKGFSQSSNLHIHRCTH), 118 to 140 (YQCYECGKGFSQSSDLRIHLRVH), 146 to 168 (YHCGKCGQGFSQSSKLLIHQRVH), and 174 to 196 (YECSKCGKGFSQSSNLHIHQRVH).

The protein belongs to the krueppel C2H2-type zinc-finger protein family. In terms of tissue distribution, preferentially expressed in transformed mouse cells.

The protein localises to the nucleus. May be involved in transcriptional regulation. In Mus musculus (Mouse), this protein is Zinc finger protein 239 (Znf239).